Consider the following 242-residue polypeptide: Segregation and condensation protein A (242 aa).

It belongs to the ScpA family. As to quaternary structure, component of a cohesin-like complex composed of ScpA, ScpB and the Smc homodimer, in which ScpA and ScpB bind to the head domain of Smc. The presence of the three proteins is required for the association of the complex with DNA.

The protein localises to the cytoplasm. Functionally, participates in chromosomal partition during cell division. May act via the formation of a condensin-like complex containing Smc and ScpB that pull DNA away from mid-cell into both cell halves. This is Segregation and condensation protein A from Streptococcus pneumoniae (strain Taiwan19F-14).